An 862-amino-acid chain; its full sequence is Dipeptidyl peptidase 9 (862 aa).

Residues Ser-729, Asp-807, and His-839 each act as charge relay system in the active site. Ser-729 provides a ligand contact to Val-boroPro.

This sequence belongs to the peptidase S9B family. DPPIV subfamily. In terms of assembly, homodimer. Forms a ternary complex with NLRP1, composed of a DPP9 homodimer, one full-length NLRP1 protein, and one cleaved C-terminus of NLRP1 (NACHT, LRR and PYD domains-containing protein 1, C-terminus). Forms a ternary complex with CARD8, composed of a DPP9 homodimer, one full-length NLRP1 protein, and one cleaved C-terminus of CARD8 (Caspase recruitment domain-containing protein 8, C-terminus). In the ternary complex, only one subunit of the DPP9 homodimer is bound to NLRP1 or CARD8. In terms of tissue distribution, detected in kidney, skin, brain, thymus and liver (at protein level).

It is found in the cytoplasm. The protein localises to the cytosol. It carries out the reaction Release of an N-terminal dipeptide, Xaa-Yaa-|-Zaa-, from a polypeptide, preferentially when Yaa is Pro, provided Zaa is neither Pro nor hydroxyproline.. Its activity is regulated as follows. Inhibited by the serine proteinase inhibitor 4-(2-aminoethyl)benzenesulphonyl fluoride (AEBSF), and by di-isopropylfluorophosphate. Inhibited by Val-boroPro (Talabostat, PT-100), a non-selective inhibitor, which triggers pyroptosis in monocytes and macrophages. Val-boroPro inhibits activity by binding to the active site, mimicking a substrate-bound state, thereby displacing the C-terminal fragment of NLRP1, leading to activation of the NLRP1 inflammasome. In contrast, Val-boroPro does not directly displaces CARD8: it acts by promoting degradation of the N-terminal part of CARD8, leading to indirect disruption of the ternary complex. Functionally, dipeptidyl peptidase that cleaves off N-terminal dipeptides from proteins having a Pro or Ala residue at position 2. Acts as a key inhibitor of caspase-1-dependent monocyte and macrophage pyroptosis in resting cells by preventing activation of NLRP1 and CARD8. Sequesters the cleaved C-terminal part of NLRP1 and CARD8, which respectively constitute the active part of the NLRP1 and CARD8 inflammasomes, in a ternary complex, thereby preventing their oligomerization and activation. The dipeptidyl peptidase activity is required to suppress NLRP1 and CARD8; however, neither NLRP1 nor CARD8 are bona fide substrates of DPP9, suggesting the existence of substrate(s) required for NLRP1 and CARD8 inhibition. In Mus musculus (Mouse), this protein is Dipeptidyl peptidase 9.